A 55-amino-acid chain; its full sequence is UPF0434 protein BPEN_388 (55 aa).

Belongs to the UPF0434 family.

This chain is UPF0434 protein BPEN_388, found in Blochmanniella pennsylvanica (strain BPEN).